Here is a 434-residue protein sequence, read N- to C-terminus: Angio-associated migratory cell protein (434 aa).

The tract at residues 1-63 (MESESESGAA…EEEEEEGNEE (63 aa)) is disordered. Ser20 bears the Phosphoserine mark. Acidic residues predominate over residues 39-62 (DPDDLAQEMEDVDFEEEEEEEGNE). 8 WD repeats span residues 89–129 (LHSA…LLFE), 132–171 (GHKD…EVWS), 173–212 (EAGD…KTFQ), 214–254 (PNCP…HVLK), 258–299 (GHQG…GVFR), 315–354 (SESN…LRHQ), 356–395 (QHQS…LLTD), and 398–433 (GHTA…QRPD).

It localises to the cell membrane. It is found in the cytoplasm. Its function is as follows. Plays a role in angiogenesis and cell migration. In smooth muscle cell migration, may act through the RhoA pathway. This Pongo abelii (Sumatran orangutan) protein is Angio-associated migratory cell protein (AAMP).